The primary structure comprises 343 residues: Retroviral-like aspartic protease 1 (343 aa).

Residues 1 to 55 (MGSPGASLGIKKALQSEQATALPASAPAVSQPTAPAPSCLPKAGQVIPTLLREAP) are Cytoplasmic-facing. Positions 1–190 (MGSPGASLGI…HLPKEIVFAN (190 aa)) are excised as a propeptide. The helical transmembrane segment at 56–76 (FSSVIAPTLLCGFLFLAWVAA) threads the bilayer. Over 77–343 (EVPEESSRMA…SEEGRQELSH (267 aa)) the chain is Extracellular. The region spanning 207–288 (VRFLVDSGAQ…AEEAIIGTDV (82 aa)) is the Peptidase A2 domain. Aspartate 212 is an active-site residue. Asparagine 276 is a glycosylation site (N-linked (GlcNAc...) asparagine). Residues 327–343 (LIEEDPSSEEGRQELSH) constitute a propeptide that is removed on maturation.

As to quaternary structure, homodimer. In terms of processing, undergoes autocleavage which is necessary for activation of the protein. In terms of tissue distribution, expressed primarily in the granular layer of the epidermis and inner root sheath of hair follicles. In psoriatic skin, expressed throughout the stratum corneum. In ulcerated skin, expressed in the stratum granulosum of intact epidermis but almost absent from ulcerated regions. Expressed in differentiated areas of squamous cell carcinomas but not in undifferentiated tumors.

It is found in the membrane. In terms of biological role, protease responsible for filaggrin processing, essential for the maintenance of a proper epidermis organization. The sequence is that of Retroviral-like aspartic protease 1 from Homo sapiens (Human).